Consider the following 321-residue polypeptide: Glycerol-3-phosphate dehydrogenase [NAD(P)+] (321 aa).

Positions 15, 35, and 101 each coordinate NADPH. Positions 101 and 129 each coordinate sn-glycerol 3-phosphate. Ala-133 is a binding site for NADPH. 5 residues coordinate sn-glycerol 3-phosphate: Lys-184, Asp-237, Ser-247, Arg-248, and Asn-249. The active-site Proton acceptor is the Lys-184. Arg-248 contributes to the NADPH binding site. NADPH-binding residues include Val-268 and Glu-270.

The protein belongs to the NAD-dependent glycerol-3-phosphate dehydrogenase family.

The protein resides in the cytoplasm. The catalysed reaction is sn-glycerol 3-phosphate + NAD(+) = dihydroxyacetone phosphate + NADH + H(+). It catalyses the reaction sn-glycerol 3-phosphate + NADP(+) = dihydroxyacetone phosphate + NADPH + H(+). Its pathway is membrane lipid metabolism; glycerophospholipid metabolism. Functionally, catalyzes the reduction of the glycolytic intermediate dihydroxyacetone phosphate (DHAP) to sn-glycerol 3-phosphate (G3P), the key precursor for phospholipid synthesis. This is Glycerol-3-phosphate dehydrogenase [NAD(P)+] from Acidiphilium cryptum (strain JF-5).